The chain runs to 604 residues: Nuclear cap-binding protein subunit 3 (604 aa).

The tract at residues 1–36 is disordered; the sequence is MAAVRGLRISVKAEATATTAEPRGPEPEPMEVEEGE. Residues 116–177 are RNA recognition motif (RRM) domain; that stretch reads DTIYICGVDE…MSSFPDQEKP (62 aa). The WLDD motif; essential for 7-methylguanosine-containing mRNA cap binding motif lies at 145–148; it reads WLDD. Disordered stretches follow at residues 168–219, 319–383, and 457–604; these read MSSF…DIEL, KHRH…DSDE, and QNNN…DTES. Residues 173–198 are compositionally biased toward basic and acidic residues; it reads DQEKPKGGENNEEKTAEKNKKEKQEE. Acidic residues-rich tracts occupy residues 199-219 and 331-349; these read STDD…DIEL and EPIE…DEDD. A compositionally biased stretch (basic and acidic residues) spans 350–370; sequence RVVVEYRDDLQPFKQSRDRGA. Residues 458 to 469 are compositionally biased toward polar residues; sequence NNNGLRQPNSIV. Composition is skewed to basic and acidic residues over residues 495-505, 539-548, and 569-582; these read PRREPISDVHS, TQEKTSDKPE, and IKEK…KSRL. Residues 595 to 604 are compositionally biased toward low complexity; that stretch reads ESSSGSDTES.

The protein belongs to the NCBP3 family. In terms of assembly, component of an alternative cap-binding complex (CBC) composed of NCBP1/CBP80 and NCBP3.

The protein localises to the nucleus. The protein resides in the cytoplasm. Functionally, associates with NCBP1/CBP80 to form an alternative cap-binding complex (CBC) which plays a key role in mRNA export. NCBP3 serves as adapter protein linking the capped RNAs (m7GpppG-capped RNA) to NCBP1/CBP80. Unlike the conventional CBC with NCBP2 which binds both small nuclear RNA (snRNA) and messenger (mRNA) and is involved in their export from the nucleus, the alternative CBC with NCBP3 does not bind snRNA and associates only with mRNA thereby playing a role in only mRNA export. This is Nuclear cap-binding protein subunit 3 from Gallus gallus (Chicken).